The sequence spans 226 residues: Protein Thf1 (226 aa).

The stretch at Glu-183–Ala-213 forms a coiled coil.

It belongs to the THF1 family.

Functionally, may be involved in photosynthetic membrane biogenesis. In Gloeothece citriformis (strain PCC 7424) (Cyanothece sp. (strain PCC 7424)), this protein is Protein Thf1.